The primary structure comprises 335 residues: MTHSSLPGYFGPLFAVFLFVLGLCVGSFLNVVIARVPLDQSIVRPRSRCPRCGHVLAWYENIPLLSWLALRARCRGCGVPISVRYPLVELLTGLLFFACLRRFGWTYELVPALVLVSLLVPLAFIDLDHWILPLSMTVPGMLAGIALAFPLGMDAFRDALMGAAVGFLSFRMMEYVGWKVFQREALGAGDKYLVAMLGAFLTWRALLGVLLFASMQGAVVGILMLLATGRAGPRTENTQDEPAGDAPPLTMTWEFTQPGLPLWKRLLLVPVCLLVQPIPDAPLDEEGEEEEWVPERTSIPFGPWLALAGLELLLLGPWLSRVLPADIAMMLGGLP.

A helical membrane pass occupies residues leucine 13 to isoleucine 33. Cysteine 49, cysteine 52, cysteine 74, and cysteine 77 together coordinate Zn(2+). 5 helical membrane passes run tryptophan 105–isoleucine 125, isoleucine 131–leucine 151, leucine 206–leucine 226, proline 258–isoleucine 278, and isoleucine 299–leucine 319.

This sequence belongs to the peptidase A24 family. It depends on Zn(2+) as a cofactor.

The protein localises to the cell inner membrane. It carries out the reaction Typically cleaves a -Gly-|-Phe- bond to release an N-terminal, basic peptide of 5-8 residues from type IV prepilin, and then N-methylates the new N-terminal amino group, the methyl donor being S-adenosyl-L-methionine.. In terms of biological role, plays an essential role in type IV pili and type II pseudopili formation by proteolytically removing the leader sequence from substrate proteins and subsequently monomethylating the alpha-amino group of the newly exposed N-terminal phenylalanine. The protein is Prepilin leader peptidase/N-methyltransferase (pilD) of Myxococcus xanthus (strain DK1622).